The following is a 461-amino-acid chain: Coagulation factor IX (461 aa).

The first 28 residues, 1 to 28 (MQRVNMIMAESPGLITICLLGYLLSAEC), serve as a signal peptide directing secretion. Residues 29–46 (TVFLDHENANKILNRPKR) constitute a propeptide that is removed on maturation. Residues Tyr47, Asn48, Glu53, Glu54, Glu61, Glu63, Glu66, Glu67, Glu72, Glu73, and Glu76 each contribute to the Ca(2+) site. The 46-residue stretch at 47–92 (YNSGKLEEFVQGNLERECMEEKCSFEEAREVFENTERTTEFWKQYV) folds into the Gla domain. 11 positions are modified to 4-carboxyglutamate: Glu53, Glu54, Glu61, Glu63, Glu66, Glu67, Glu72, Glu73, Glu76, Glu79, and Glu82. Mg(2+) is bound at residue Glu61. A disulfide bond links Cys64 and Cys69. Glu66 provides a ligand contact to Mg(2+). Position 72 (Glu72) interacts with Mg(2+). Residue Glu76 participates in Mg(2+) binding. Glu82 is a Ca(2+) binding site. Glu82 lines the Mg(2+) pocket. O-linked (GalNAc...) threonine glycosylation occurs at Thr85. Ca(2+) contacts are provided by Glu86, Asp93, Gly94, and Gln96. Glu86 is subject to 4-carboxyglutamate. Residue Glu86 coordinates Mg(2+). Positions 93-129 (DGDQCESNPCLNGGSCKDDINSYECWCPFGFEGKNCE) constitute an EGF-like 1; calcium-binding domain. 10 cysteine pairs are disulfide-bonded: Cys97-Cys108, Cys102-Cys117, Cys119-Cys128, Cys134-Cys145, Cys141-Cys155, Cys157-Cys170, Cys178-Cys335, Cys252-Cys268, Cys382-Cys396, and Cys407-Cys435. Ser99 is a glycosylation site (O-linked (Glc...) serine). Ser107 carries an O-linked (Fuc...) serine glycan. Residues Asp110 and Asp111 each contribute to the Ca(2+) site. (3R)-3-hydroxyaspartate is present on Asp110. Residue Ser114 is modified to Phosphoserine. The region spanning 130–171 (LDVTCNIKNGRCEQFCKNSADNKVVCSCTEGYRLAENQKSCE) is the EGF-like 2 domain. Positions 192–226 (AETVFPDVDYVNSTEAETILDNITQSTQSFNDFTR) are cleaved as a propeptide — activation peptide. At Tyr201 the chain carries Sulfotyrosine. Residue Asn203 is glycosylated (N-linked (GlcNAc...) asparagine). The residue at position 204 (Ser204) is a Phosphoserine. Thr205 is subject to Phosphothreonine; alternate. Thr205 is a glycosylation site (O-linked (GalNAc...) threonine; alternate). The N-linked (GlcNAc...) asparagine glycan is linked to Asn213. Thr215 and Thr225 each carry an O-linked (GalNAc...) threonine glycan. The region spanning 227–459 (VVGGEDAKPG…YVNWIKEKTK (233 aa)) is the Peptidase S1 domain. The Charge relay system role is filled by His267. 5 residues coordinate Ca(2+): Glu281, Asn283, Glu286, Glu288, and Glu291. The active-site Charge relay system is Asp315. Residue Ser411 is the Charge relay system of the active site.

The protein belongs to the peptidase S1 family. Heterodimer of a light chain and a heavy chain; disulfide-linked. Interacts (inactive and activated) with F11 (activated) in calcium-dependent manner. Interacts with SERPINC1. Interacts (activated) with iripin-8, a serine protease inhibitor from Ixodes ricinus saliva. Interacts (inactive and activated) with nitrophorin-2, an anticoagulant protein from Rhodnius prolixus. Activated by factor XIa, which excises the activation peptide. The propeptide can also be removed by snake venom protease. Activated by coagulation factor VIIa-tissue factor (F7-F3) complex in calcium-dependent manner. Post-translationally, the iron and 2-oxoglutarate dependent 3-hydroxylation of aspartate and asparagine is (R) stereospecific within EGF domains. In terms of tissue distribution, detected in blood plasma (at protein level). Synthesized primarily in the liver and secreted in plasma.

It localises to the secreted. It carries out the reaction Selective cleavage of Arg-|-Ile bond in factor X to form factor Xa.. Functionally, factor IX is a vitamin K-dependent plasma protein that participates in the intrinsic pathway of blood coagulation by converting factor X to its active form in the presence of Ca(2+) ions, phospholipids, and factor VIIIa. In Homo sapiens (Human), this protein is Coagulation factor IX (F9).